We begin with the raw amino-acid sequence, 209 residues long: Ribosomal RNA large subunit methyltransferase E (209 aa).

5 residues coordinate S-adenosyl-L-methionine: glycine 63, tryptophan 65, aspartate 83, aspartate 99, and aspartate 124. The Proton acceptor role is filled by lysine 164. The 19-residue stretch at 191-209 (EASRGRSREVYIVATGYKG) folds into the TRAM domain.

This sequence belongs to the class I-like SAM-binding methyltransferase superfamily. RNA methyltransferase RlmE family.

The protein localises to the cytoplasm. The enzyme catalyses uridine(2552) in 23S rRNA + S-adenosyl-L-methionine = 2'-O-methyluridine(2552) in 23S rRNA + S-adenosyl-L-homocysteine + H(+). Functionally, specifically methylates the uridine in position 2552 of 23S rRNA at the 2'-O position of the ribose in the fully assembled 50S ribosomal subunit. This is Ribosomal RNA large subunit methyltransferase E from Haemophilus influenzae (strain 86-028NP).